We begin with the raw amino-acid sequence, 400 residues long: tRNA-specific 2-thiouridylase MnmA (400 aa).

Residues alanine 19–serine 26 and leucine 45 each bind ATP. Cysteine 113 (nucleophile) is an active-site residue. Residues cysteine 113 and cysteine 210 are joined by a disulfide bond. Glycine 137 contributes to the ATP binding site. Residues arginine 160–glutamine 162 form an interaction with tRNA region. Cysteine 210 acts as the Cysteine persulfide intermediate in catalysis.

This sequence belongs to the MnmA/TRMU family.

It is found in the cytoplasm. It catalyses the reaction S-sulfanyl-L-cysteinyl-[protein] + uridine(34) in tRNA + AH2 + ATP = 2-thiouridine(34) in tRNA + L-cysteinyl-[protein] + A + AMP + diphosphate + H(+). Catalyzes the 2-thiolation of uridine at the wobble position (U34) of tRNA, leading to the formation of s(2)U34. This is tRNA-specific 2-thiouridylase MnmA from Nitrobacter hamburgensis (strain DSM 10229 / NCIMB 13809 / X14).